We begin with the raw amino-acid sequence, 760 residues long: Alpha-amylase (760 aa).

An N-terminal signal peptide occupies residues 1-34 (MSKRSKLLKRRMLSLSVICVLIGYGPVFNPVRSQ). Residues N143, T184, and D192 each coordinate Ca(2+). The Nucleophile role is filled by D222. H226 is a binding site for Ca(2+). E262 functions as the Proton donor in the catalytic mechanism.

This sequence belongs to the glycosyl hydrolase 13 family. In terms of assembly, monomer. Ca(2+) serves as cofactor.

The catalysed reaction is Endohydrolysis of (1-&gt;4)-alpha-D-glucosidic linkages in polysaccharides containing three or more (1-&gt;4)-alpha-linked D-glucose units.. The sequence is that of Alpha-amylase (amyA) from Clostridium acetobutylicum (strain ATCC 824 / DSM 792 / JCM 1419 / IAM 19013 / LMG 5710 / NBRC 13948 / NRRL B-527 / VKM B-1787 / 2291 / W).